A 149-amino-acid chain; its full sequence is 1,4-dihydroxy-2-naphthoyl-CoA hydrolase (149 aa).

The active site involves Asp19.

Belongs to the 4-hydroxybenzoyl-CoA thioesterase family. DHNA-CoA hydrolase subfamily.

The catalysed reaction is 1,4-dihydroxy-2-naphthoyl-CoA + H2O = 1,4-dihydroxy-2-naphthoate + CoA + H(+). The protein operates within cofactor biosynthesis; phylloquinone biosynthesis. Its pathway is quinol/quinone metabolism; 1,4-dihydroxy-2-naphthoate biosynthesis; 1,4-dihydroxy-2-naphthoate from chorismate: step 7/7. In terms of biological role, catalyzes the hydrolysis of 1,4-dihydroxy-2-naphthoyl-CoA (DHNA-CoA) to 1,4-dihydroxy-2-naphthoate (DHNA), a reaction involved in phylloquinone (vitamin K1) biosynthesis. The protein is 1,4-dihydroxy-2-naphthoyl-CoA hydrolase of Synechococcus sp. (strain CC9605).